A 121-amino-acid polypeptide reads, in one-letter code: MEAKAIARHIRVTPMKARRVVNLVRGKQANEALAILKFAPQAASEPVFKVLQSAMANARVLADRDGVAFDDSDLFITEAFVDEGPTMKRFQPRAQGRAYRIRKRTSHITLVVATPEKEEAR.

This sequence belongs to the universal ribosomal protein uL22 family. As to quaternary structure, part of the 50S ribosomal subunit.

In terms of biological role, this protein binds specifically to 23S rRNA; its binding is stimulated by other ribosomal proteins, e.g. L4, L17, and L20. It is important during the early stages of 50S assembly. It makes multiple contacts with different domains of the 23S rRNA in the assembled 50S subunit and ribosome. Its function is as follows. The globular domain of the protein is located near the polypeptide exit tunnel on the outside of the subunit, while an extended beta-hairpin is found that lines the wall of the exit tunnel in the center of the 70S ribosome. The sequence is that of Large ribosomal subunit protein uL22 from Paenarthrobacter aurescens (strain TC1).